We begin with the raw amino-acid sequence, 380 residues long: Cytochrome b (380 aa).

The next 4 membrane-spanning stretches (helical) occupy residues 33–53 (FGSLLGLCLAIQLLTGLFLAM), 77–98 (WLIRNMHANGASFFFICIYLHI), 113–133 (WNVGVVLLLLVMMTAFVGYVL), and 178–198 (FFAFHFLLPFVIAAATLLHLL). Histidine 83 and histidine 97 together coordinate heme b. The heme b site is built by histidine 182 and histidine 196. Histidine 201 provides a ligand contact to a ubiquinone. Helical transmembrane passes span 226-246 (YKDLLGFIVLFLALASLALFS), 288-308 (LGGVLALLASILILMLVPILH), 320-340 (FSQIIFWTLVADVAILTWIGG), and 347-367 (YIIIGQIASALYFLIFLVFFP).

It belongs to the cytochrome b family. As to quaternary structure, the cytochrome bc1 complex contains 3 respiratory subunits (MT-CYB, CYC1 and UQCRFS1), 2 core proteins (UQCRC1 and UQCRC2) and probably 6 low-molecular weight proteins. The cofactor is heme b.

Its subcellular location is the mitochondrion inner membrane. Functionally, component of the ubiquinol-cytochrome c reductase complex (complex III or cytochrome b-c1 complex) that is part of the mitochondrial respiratory chain. The b-c1 complex mediates electron transfer from ubiquinol to cytochrome c. Contributes to the generation of a proton gradient across the mitochondrial membrane that is then used for ATP synthesis. This chain is Cytochrome b (mt-cyb), found in Apogon semilineatus (Half-lined cardinal).